Reading from the N-terminus, the 224-residue chain is Peroxynitrite isomerase 2 (224 aa).

The short motif at 71-77 (GVWRGEG) is the GXWXGXG element. Residues Lys187 and His214 each coordinate heme b.

Belongs to the nitrobindin family. In terms of assembly, homodimer. Heme b serves as cofactor.

The catalysed reaction is peroxynitrite = nitrate. It functions in the pathway nitrogen metabolism. In terms of biological role, heme-binding protein able to scavenge peroxynitrite and to protect free L-tyrosine against peroxynitrite-mediated nitration, by acting as a peroxynitrite isomerase that converts peroxynitrite to nitrate. Therefore, this protein likely plays a role in peroxynitrite sensing and in the detoxification of reactive nitrogen and oxygen species (RNS and ROS, respectively). Is able to bind nitric oxide (NO) in vitro, but may act as a sensor of peroxynitrite levels in vivo. The protein is Peroxynitrite isomerase 2 of Mycobacterium sp. (strain JLS).